The chain runs to 325 residues: Chain length determinant protein (325 aa).

Over 1 to 31 (MRVENNNVSGQNHDPEQIDLIDLLVQLWRGK) the chain is Cytoplasmic. The chain crosses the membrane as a helical span at residues 32 to 52 (MTIIISVIVAIALAIGYLAVA). Residues 53–294 (KEKWTSTAII…LPIRRDSPKK (242 aa)) lie on the Periplasmic side of the membrane. A helical transmembrane segment spans residues 295–315 (AITLILAVLLGGMVGAGIVLG). Residues 316–325 (RNALRNYNAK) lie on the Cytoplasmic side of the membrane.

The protein belongs to the WzzB/Cld/Rol family.

It localises to the cell inner membrane. It participates in bacterial outer membrane biogenesis; lipopolysaccharide biosynthesis. Functionally, confers a modal distribution of chain length on the O-antigen component of lipopolysaccharide (LPS). Gives rise to a reduced number of short chain molecules and increases in numbers of longer molecules, with a modal value of 13 (in strain O111/M92) and of 17 (in strain K12). The chain is Chain length determinant protein (wzzB) from Escherichia coli.